The chain runs to 664 residues: Cyclic nucleotide-gated channel alpha-2 (664 aa).

Polar residues predominate over residues 1–10 (MMTEKSNGVK). The segment at 1-61 (MMTEKSNGVK…LQRLAEMDTP (61 aa)) is disordered. The Cytoplasmic portion of the chain corresponds to 1 to 146 (MMTEKSNGVK…PAGDWYYRWL (146 aa)). The helical transmembrane segment at 147–168 (FVIAMPVLYNWCLLVARACFSD) threads the bilayer. Topologically, residues 169 to 178 (LQRNYFVVWL) are extracellular. A helical transmembrane segment spans residues 179 to 199 (VLDYFSDTVYIADLIIRLRTG). The Cytoplasmic portion of the chain corresponds to 200–224 (FLEQGLLVKDPKKLRDNYIHTLQFK). A helical membrane pass occupies residues 225–243 (LDVASIIPTDLIYFAVGIH). Topologically, residues 244-248 (SPEVR) are extracellular. The chain crosses the membrane as a helical span at residues 249-267 (FNRLLHFARMFEFFDRTET). The Cytoplasmic portion of the chain corresponds to 268–274 (RTSYPNI). The segment at 272–380 (PNIFRISNLV…GNVGSMISNM (109 aa)) is ion conduction pathway. A helical membrane pass occupies residues 275-298 (FRISNLVLYILVIIHWNACIYYAI). The Extracellular segment spans residues 299–321 (SKSIGFGVDTWVYPNITDPEYGY). The next 2 helical transmembrane spans lie at 322-356 (LARE…LFVI) and 357-381 (FDFL…SNMN). Residues 339 to 342 (TIGE) form a selectivity filter region. The interval 382 to 458 (ATRAEFQAKI…STLKKVRIFQ (77 aa)) is C-linker. Topologically, residues 382 to 664 (ATRAEFQAKI…INTPEPAVAE (283 aa)) are cytoplasmic. Positions 462-582 (AGLLVELVLK…EERGREILMK (121 aa)) are cyclic nucleotide-binding domain. The 3',5'-cyclic GMP site is built by glycine 522, serine 525, arginine 538, and threonine 539. The 3',5'-cyclic AMP site is built by arginine 538 and threonine 539. Residues 599–653 (VQEKLEQLETNMETLYTRFARLLAEYTGAQQKLKQRITVLETKMKQNHEDDYLSD) adopt a coiled-coil conformation.

This sequence belongs to the cyclic nucleotide-gated cation channel (TC 1.A.1.5) family. CNGA2 subfamily. The olfactory cyclic nucleotide-gated channel is an heterotetramer composed of CNGA2, CNGA4 and CNGB1b subunits with 2:1:1 stoichiometry.

The protein resides in the cell projection. It localises to the cilium membrane. It catalyses the reaction Ca(2+)(in) = Ca(2+)(out). The enzyme catalyses Na(+)(in) = Na(+)(out). It carries out the reaction K(+)(in) = K(+)(out). The catalysed reaction is NH4(+)(in) = NH4(+)(out). It catalyses the reaction Rb(+)(in) = Rb(+)(out). The enzyme catalyses Li(+)(in) = Li(+)(out). It carries out the reaction Cs(+)(in) = Cs(+)(out). In terms of biological role, pore-forming subunit of the olfactory cyclic nucleotide-gated channel. Operates in the cilia of olfactory sensory neurons where chemical stimulation of the odorant is converted to an electrical signal. Mediates odorant-induced cAMP-dependent Ca(2+) influx triggering neuron depolarization. The rise of intracellular Ca(2+) levels potentiates the olfactory response by activating Ca(2+)-dependent Cl(-) channels, but it also serves as a negative feedback signal to desensitize the channel for rapid adaptation to odorants. Conducts cAMP- and cGMP-gated ion currents, with permeability for monovalent and divalent cations. The sequence is that of Cyclic nucleotide-gated channel alpha-2 from Mus musculus (Mouse).